We begin with the raw amino-acid sequence, 263 residues long: Putative hydro-lyase Psyc_1103 (263 aa).

This sequence belongs to the D-glutamate cyclase family.

The chain is Putative hydro-lyase Psyc_1103 from Psychrobacter arcticus (strain DSM 17307 / VKM B-2377 / 273-4).